Reading from the N-terminus, the 172-residue chain is S-ribosylhomocysteine lyase (172 aa).

Positions 54, 58, and 128 each coordinate Fe cation.

This sequence belongs to the LuxS family. In terms of assembly, homodimer. Fe cation is required as a cofactor.

The enzyme catalyses S-(5-deoxy-D-ribos-5-yl)-L-homocysteine = (S)-4,5-dihydroxypentane-2,3-dione + L-homocysteine. In terms of biological role, involved in the synthesis of autoinducer 2 (AI-2) which is secreted by bacteria and is used to communicate both the cell density and the metabolic potential of the environment. The regulation of gene expression in response to changes in cell density is called quorum sensing. Catalyzes the transformation of S-ribosylhomocysteine (RHC) to homocysteine (HC) and 4,5-dihydroxy-2,3-pentadione (DPD). This chain is S-ribosylhomocysteine lyase, found in Vibrio alginolyticus.